The sequence spans 344 residues: Meiotic recombination protein DMC1 homolog A (344 aa).

133–140 contacts ATP; that stretch reads GEFRSGKT. Residue Arg-235 participates in dsDNA binding. SsDNA is bound by residues Arg-235, Phe-238, Arg-241, Arg-247, and Arg-315. DsDNA contacts are provided by Arg-241 and Arg-247.

It belongs to the RecA family. DMC1 subfamily. In terms of tissue distribution, expressed in meiotic young panicles.

The protein resides in the nucleus. Recombinase that may participate in meiotic recombination, specifically in homologous strand assimilation, which is required for the resolution of meiotic double-strand breaks. Exhibits DNA-dependent ATPase activity when bound to single-stranded DNA (ssDNA). Mediates renaturation of homologous complementary strands as well as assimilation of single strands into homologous supercoiled duplexes leading to D-loop formation. Binds circular single-stranded DNA (ssDNA) and circular double-stranded DNA (dsDNA) in vitro. Catalyzes DNA homologous renaturation and DNA strand exchange. The rates of these activities are dependent on the state of ATP hydrolysis. Forms helical filaments along ssDNA and dsDNA, and promotes strand exchange between ssDNA and dsDNA with long DNA substrates of several thousand base pairs. The presence of the replication protein A is not required for this activity. Seems to be required for homologous pairing and subsequent chromosome segregation during male meiosis. May be not directly required for homologous pairing during male meiosis. Required for synaptonemal complex assembly and crossover formation. Functions redundantly with DMC1B. The polypeptide is Meiotic recombination protein DMC1 homolog A (Oryza sativa subsp. japonica (Rice)).